The following is a 151-amino-acid chain: MKLILTADVDNLGAPGDTVEVKDGYGRNYLLPRGLAIVATRGAEKQVEGIRRAQEARAVRGLDHAKELKDAIEGLENISLSVKTAGDSGKLFGSVTAADVAGAIKAAGGPVVDKRNLELPKAHIKATGKHAIVVNLHPDVVAKFHLNVVGA.

Belongs to the bacterial ribosomal protein bL9 family.

Its function is as follows. Binds to the 23S rRNA. This Rhodococcus jostii (strain RHA1) protein is Large ribosomal subunit protein bL9.